Here is a 258-residue protein sequence, read N- to C-terminus: Indole-3-glycerol phosphate synthase (258 aa).

Belongs to the TrpC family.

It carries out the reaction 1-(2-carboxyphenylamino)-1-deoxy-D-ribulose 5-phosphate + H(+) = (1S,2R)-1-C-(indol-3-yl)glycerol 3-phosphate + CO2 + H2O. Its pathway is amino-acid biosynthesis; L-tryptophan biosynthesis; L-tryptophan from chorismate: step 4/5. This Geobacillus thermodenitrificans (strain NG80-2) protein is Indole-3-glycerol phosphate synthase.